The following is a 438-amino-acid chain: Trigger factor (438 aa).

The region spanning 170–255 (GDTVVIDFDG…IHELKKLETP (86 aa)) is the PPIase FKBP-type domain.

The protein belongs to the FKBP-type PPIase family. Tig subfamily.

Its subcellular location is the cytoplasm. The enzyme catalyses [protein]-peptidylproline (omega=180) = [protein]-peptidylproline (omega=0). Involved in protein export. Acts as a chaperone by maintaining the newly synthesized protein in an open conformation. Functions as a peptidyl-prolyl cis-trans isomerase. This Oenococcus oeni (Leuconostoc oenos) protein is Trigger factor (tig).